The primary structure comprises 506 residues: MSISIRPDEISSIIQQQIEQYDQEVKVANVGTVLQVGDGIARIYGLEKAMAGELLEFEDGTVGIAQNLEEDNVGAVLMGEGREIQEGSTVTATGRIAQIGVGEALIGRVVDALGRAIDGKGDIKASESRLIESPAPGIIARRSVHEPMQTGITAIDSMIPIGRGQRELIIGDRQTGKTAIAIDTIINQKGEDVVCVYVAIGQKASTVANVVQTLQEKGAMDYTVVVAAGASEPATLQFLAPYTGATIAEYFMYKGKATLVIYDDLSKQAQAYRQMSLLLRRPPGREAYPGDVFYIHSRLLERAAKLSDELGKGSMTALPIIETQAGDVSAYIPTNVISITDGQIFLSSDLFNAGIRPAVNPGISVSRVGSAAQTKAMKKVAGKIKLELAQFDDLQAFAQFASDLDKATQDQLARGQRLRELLKQSQNQPLSVAEQVAILYAGINGYLDDIPVDKVTTFTKGLRDYLKSGVNPYFQDVQSKKTLGDDEEKALKAALDDYKKTFKATA.

171–178 is an ATP binding site; that stretch reads GDRQTGKT.

The protein belongs to the ATPase alpha/beta chains family. In terms of assembly, F-type ATPases have 2 components, CF(1) - the catalytic core - and CF(0) - the membrane proton channel. CF(1) has five subunits: alpha(3), beta(3), gamma(1), delta(1), epsilon(1). CF(0) has four main subunits: a(1), b(1), b'(1) and c(9-12).

Its subcellular location is the cellular thylakoid membrane. The catalysed reaction is ATP + H2O + 4 H(+)(in) = ADP + phosphate + 5 H(+)(out). Its function is as follows. Produces ATP from ADP in the presence of a proton gradient across the membrane. The alpha chain is a regulatory subunit. This is ATP synthase subunit alpha from Trichormus variabilis (strain ATCC 29413 / PCC 7937) (Anabaena variabilis).